Here is a 194-residue protein sequence, read N- to C-terminus: Transposon Tn2501 resolvase (194 aa).

The Resolvase/invertase-type recombinase catalytic domain maps to Arg3–Gly143. Residue Ser11 is the O-(5'-phospho-DNA)-serine intermediate of the active site. Positions Ile170–Ala189 form a DNA-binding region, H-T-H motif.

This sequence belongs to the site-specific recombinase resolvase family.

Its function is as follows. Resolvase catalyzes the resolution (a site-specific recombination) of the cointegrated replicon to yield the final transposition products. The polypeptide is Transposon Tn2501 resolvase (tnpR) (Escherichia coli).